Reading from the N-terminus, the 169-residue chain is Regulator of sigma D (169 aa).

Belongs to the Rsd/AlgQ family. Interacts with RpoD.

It is found in the cytoplasm. In terms of biological role, binds RpoD and negatively regulates RpoD-mediated transcription activation by preventing the interaction between the primary sigma factor RpoD with the catalytic core of the RNA polymerase and with promoter DNA. May be involved in replacement of the RNA polymerase sigma subunit from RpoD to RpoS during the transition from exponential growth to the stationary phase. This is Regulator of sigma D from Yersinia pseudotuberculosis serotype O:1b (strain IP 31758).